The chain runs to 564 residues: Probable lysosomal cobalamin transporter (564 aa).

9 consecutive transmembrane segments (helical) span residues 8–28, 41–61, 94–114, 144–164, 188–208, 312–332, 375–395, 418–438, and 506–526; these read LIWS…STFI, VTLI…LLPV, TIVY…GIPF, YTLF…FIPT, ALTF…IIYT, LLAG…LCVT, VIFT…IAAF, LLLT…VAVI, and FFGA…LLVL.

Belongs to the LIMR family. LMBRD1 subfamily.

The protein localises to the lysosome membrane. Probable lysosomal cobalamin transporter. Required to export cobalamin from lysosomes allowing its conversion to cofactors. This chain is Probable lysosomal cobalamin transporter, found in Aspergillus clavatus (strain ATCC 1007 / CBS 513.65 / DSM 816 / NCTC 3887 / NRRL 1 / QM 1276 / 107).